The sequence spans 446 residues: Probable ribosomal RNA small subunit methyltransferase B (446 aa).

Residues 260–266 (CAAPGGK), D284, D311, and D330 contribute to the S-adenosyl-L-methionine site. The active-site Nucleophile is C383.

This sequence belongs to the class I-like SAM-binding methyltransferase superfamily. RsmB/NOP family.

Its subcellular location is the cytoplasm. The enzyme catalyses cytidine(967) in 16S rRNA + S-adenosyl-L-methionine = 5-methylcytidine(967) in 16S rRNA + S-adenosyl-L-homocysteine + H(+). Specifically methylates the cytosine at position 967 (m5C967) of 16S rRNA. The chain is Probable ribosomal RNA small subunit methyltransferase B from Synechocystis sp. (strain ATCC 27184 / PCC 6803 / Kazusa).